A 135-amino-acid polypeptide reads, in one-letter code: Galectin-1 (135 aa).

Ala-2 bears the N-acetylalanine mark. The Galectin domain occupies Gly-4 to Asp-135. N6-acetyllysine occurs at positions 13 and 29. Ser-30 is subject to Phosphoserine. A beta-D-galactoside contacts are provided by residues His-45 to Arg-49, His-53, Asn-62, and Trp-69 to Glu-72. Residue Lys-108 is modified to N6-acetyllysine; alternate. Position 108 is an N6-succinyllysine; alternate (Lys-108). Lys-128 carries the post-translational modification N6-acetyllysine.

In terms of assembly, homodimer. Binds LGALS3BP. Interacts with CD2, CD3, CD4, CD6, CD7, CD43, ALCAM and CD45. Interacts with laminin (via poly-N-acetyllactosamine). Interacts with SUSD2. Interacts with cargo receptor TMED10; the interaction mediates the translocation from the cytoplasm into the ERGIC (endoplasmic reticulum-Golgi intermediate compartment) and thereby secretion. In terms of processing, the N-terminus is blocked.

Its subcellular location is the secreted. The protein resides in the extracellular space. It localises to the extracellular matrix. It is found in the cytoplasm. Functionally, lectin that binds beta-galactoside and a wide array of complex carbohydrates. Plays a role in regulating apoptosis, cell proliferation and cell differentiation. Inhibits CD45 protein phosphatase activity and therefore the dephosphorylation of Lyn kinase. Strong inducer of T-cell apoptosis. In Bubalus bubalis (Domestic water buffalo), this protein is Galectin-1.